The following is a 492-amino-acid chain: Beclin 1-associated autophagy-related key regulator (492 aa).

Position 29 is a phosphoserine (S29). The interval C43–C58 is cysteine repeats. A coiled-coil region spans residues D71–T180. The disordered stretch occupies residues P410 to M473. The tract at residues A413–R492 is BATS. A compositionally biased stretch (acidic residues) spans E415–T433. A Phosphoserine modification is found at S416. A Phosphothreonine modification is found at T429. Over residues S448–M473 the composition is skewed to low complexity.

Belongs to the ATG14 family. In terms of assembly, forms homooligomers; homo-oligomerization is essential for the roles in membrane tethering and enhancement of SNARE-mediated fusion. Component of the PI3K (PI3KC3/PI3K-III/class III phosphatidylinositol 3-kinase) complex I (PI3KC3-C1) in which the core composed of the catalytic subunit PIK3C3, the regulatory subunit PIK3R4 and BECN1 is associated with ATG14. PI3KC3-C1 displays a V-shaped architecture with PIK3R4 serving as a bridge between PIK3C3 and the ATG14:BECN1 subcomplex. PI3KC3-C1 can associate with further regulatory subunits. Interacts with PIK3CB. Interacts (via coiled-coil domain) with BECN2 (via coiled-coil domain); this interaction is tighter than BECN2 self-association. Interacts with the STX17-SNAP29 binary t-SNARE complex. Interacts with NRBF2. Interacts with PIK3C3 and BECN1; this interaction is increased in the absence of TMEM39A. Interacts with STEEP1; the interaction is required for trafficking of STING1 from the endoplasmic reticulum. Interacts with ARMC3 (via ARM domains). In terms of processing, ubiquitinated via 'Lys-6', 'Lys-11' and 'Lys-63'-linked polyubiquitin chains on multiple lysines by MARCHF7, leading to ATG14 aggregation and loss of interaction with STX17.

Its subcellular location is the cytoplasm. The protein resides in the endoplasmic reticulum membrane. It is found in the preautophagosomal structure membrane. The protein localises to the cytoplasmic vesicle. It localises to the autophagosome membrane. In terms of biological role, required for both basal and inducible autophagy. Determines the localization of the autophagy-specific PI3-kinase complex PI3KC3-C1. Plays a role in autophagosome formation and MAP1LC3/LC3 conjugation to phosphatidylethanolamine. Promotes BECN1 translocation from the trans-Golgi network to autophagosomes. Enhances PIK3C3 activity in a BECN1-dependent manner. Essential for the autophagy-dependent phosphorylation of BECN1. Stimulates the phosphorylation of BECN1, but suppresses the phosphorylation PIK3C3 by AMPK. Binds to STX17-SNAP29 binary t-SNARE complex on autophagosomes and primes it for VAMP8 interaction to promote autophagosome-endolysosome fusion. Modulates the hepatic lipid metabolism. The sequence is that of Beclin 1-associated autophagy-related key regulator from Homo sapiens (Human).